A 410-amino-acid polypeptide reads, in one-letter code: Mating-type locus allele B3 protein (410 aa).

Residues 1-110 (MSRDPKLSLS…ANVVSPGEGC (110 aa)) are variable domain between B alleles. The segment at residues 107-184 (GEGCRNLSED…NARRRSGWSH (78 aa)) is a DNA-binding region (homeobox; TALE-type). The interval 111-410 (RNLSEDLPAY…PFLCLSVAFV (300 aa)) is highly conserved between B alleles. 2 disordered regions span residues 203-224 (AKLS…PSDD) and 278-335 (TPKP…TPEL). Polar residues predominate over residues 205 to 219 (LSSSNQSTPPSLTSE). The Nuclear localization signal motif lies at 276–308 (KKTPKPGMPRPVTTVAKRHPARKTKPAAKPKSR). The segment covering 291-307 (AKRHPARKTKPAAKPKS) has biased composition (basic residues). The span at 312–335 (PRASTTPSIDSTLDSSKLESTPEL) shows a compositional bias: polar residues. The not essential for B3 function stretch occupies residues 333 to 410 (PELSMCSTAD…PFLCLSVAFV (78 aa)).

It belongs to the TALE/M-ATYP homeobox family.

Its subcellular location is the nucleus. The B locus has at least 25 alleles, and any combination of two different B alleles yields a multimeric regulatory protein, that activates genes responsible for the pathogenicity and for the sexual development of the fungus within the corn plant. The polypeptide is Mating-type locus allele B3 protein (Mycosarcoma maydis (Corn smut fungus)).